The sequence spans 263 residues: Inner membrane protein YpjD (263 aa).

Over 1 to 3 (MPV) the chain is Periplasmic. The helical transmembrane segment at 4 to 23 (FALLALVAYSVSLALIVPGL) threads the bilayer. The Cytoplasmic segment spans residues 24–34 (LQKNGGWRRMA). The chain crosses the membrane as a helical span at residues 35–54 (IISAVIALVCHAIALEARIL). The Periplasmic segment spans residues 55–63 (PDGDSGQNL). A helical transmembrane segment spans residues 64-83 (SLLNVGSLVSLMICTVMTIV). Residues 84 to 89 (ASRNRG) lie on the Cytoplasmic side of the membrane. The helical transmembrane segment at 90-109 (WLLLPIVYAFALINLALATF) threads the bilayer. Over 110 to 123 (MPNEYITHLEATPG) the chain is Periplasmic. Residues 124 to 146 (MLVHIGLSLFSYATLIIAALYAL) traverse the membrane as a helical segment. Residues 147–181 (QLAWIDYQLKNKKLAFNQEMPPLMSIERKMFHITQ) are Cytoplasmic-facing. Residues 182–201 (IGVVLLTLTLCTGLFYMHNL) traverse the membrane as a helical segment. Residues 202–210 (FSMENIDKA) are Periplasmic-facing. The chain crosses the membrane as a helical span at residues 211 to 228 (VLSIVAWFVYIVLLWGHY). Residues 229 to 236 (HEGWRGRR) are Cytoplasmic-facing. A helical membrane pass occupies residues 237 to 259 (VVWFNVAGAVILTLAYFGSRIVQ). At 260–263 (QLIS) the chain is on the periplasmic side.

The protein resides in the cell inner membrane. The protein is Inner membrane protein YpjD (ypjD) of Escherichia coli O157:H7.